A 183-amino-acid chain; its full sequence is Glutathione-regulated potassium-efflux system ancillary protein KefG (183 aa).

The protein belongs to the NAD(P)H dehydrogenase (quinone) family. KefG subfamily. In terms of assembly, interacts with KefB.

It localises to the cell inner membrane. The catalysed reaction is a quinone + NADH + H(+) = a quinol + NAD(+). It carries out the reaction a quinone + NADPH + H(+) = a quinol + NADP(+). Functionally, regulatory subunit of a potassium efflux system that confers protection against electrophiles. Required for full activity of KefB. In Yersinia pestis bv. Antiqua (strain Angola), this protein is Glutathione-regulated potassium-efflux system ancillary protein KefG.